Reading from the N-terminus, the 508-residue chain is Cytochrome P450 monooxygenase pkfB (508 aa).

Residues 9–29 traverse the membrane as a helical segment; sequence FSLGLSQILVCLALLYAAIHI. N-linked (GlcNAc...) asparagine glycosylation is found at Asn57 and Asn305. Residue Cys450 participates in heme binding.

It belongs to the cytochrome P450 family. It depends on heme as a cofactor.

Its subcellular location is the membrane. It participates in secondary metabolite biosynthesis. Functionally, cytochrome P450 monooxygenase; part of the gene cluster that mediates the biosynthesis of aspernidine A, a prenylated isoindolinone. The starting point of the biosynthesis of aspernidin A is the production of orsellinaldehyde by the non-reducing polyketide synthase pkfA. Hydroxylation, methylation of one of the phenol groups, and prenylation, presumably catalyzed by the prenyltransferase pkfE, would be needed to yield aspernidine D. Subsequently, the cytochrome P450 monooxygenase pkfB is responsible for hydroxylation of aspernidine D to yield aspernidine E. The dehydrogenase pkfF may be responsible for further oxidation of aspernidine E to form a dialdehyde intermediate which is further transformed in a series of steps, some of which are enzyme-mediated, to generate aspernidine A. The possibility that additional enzymes outside of the cluster are involved in aspernidine A biosynthesis cannot be excluded. This chain is Cytochrome P450 monooxygenase pkfB, found in Emericella nidulans (strain FGSC A4 / ATCC 38163 / CBS 112.46 / NRRL 194 / M139) (Aspergillus nidulans).